The primary structure comprises 385 residues: 8-amino-7-oxononanoate synthase (385 aa).

Arginine 21 is a binding site for substrate. Residue 108–109 (GF) coordinates pyridoxal 5'-phosphate. Position 133 (histidine 133) interacts with substrate. Residues serine 179, histidine 207, and threonine 233 each contribute to the pyridoxal 5'-phosphate site. Lysine 236 carries the post-translational modification N6-(pyridoxal phosphate)lysine. Substrate is bound at residue threonine 352.

Belongs to the class-II pyridoxal-phosphate-dependent aminotransferase family. BioF subfamily. As to quaternary structure, homodimer. It depends on pyridoxal 5'-phosphate as a cofactor.

The enzyme catalyses 6-carboxyhexanoyl-[ACP] + L-alanine + H(+) = (8S)-8-amino-7-oxononanoate + holo-[ACP] + CO2. It functions in the pathway cofactor biosynthesis; biotin biosynthesis. Catalyzes the decarboxylative condensation of pimeloyl-[acyl-carrier protein] and L-alanine to produce 8-amino-7-oxononanoate (AON), [acyl-carrier protein], and carbon dioxide. The protein is 8-amino-7-oxononanoate synthase of Klebsiella pneumoniae (strain 342).